Here is a 163-residue protein sequence, read N- to C-terminus: Nucleotide-binding protein C8J_0350 (163 aa).

Belongs to the YajQ family.

Its function is as follows. Nucleotide-binding protein. The polypeptide is Nucleotide-binding protein C8J_0350 (Campylobacter jejuni subsp. jejuni serotype O:6 (strain 81116 / NCTC 11828)).